Reading from the N-terminus, the 446-residue chain is Amino-acid acetyltransferase (446 aa).

The N-acetyltransferase domain occupies 299–431 (EQVRDAEIDD…SHLPMKKQKL (133 aa)).

The protein belongs to the acetyltransferase family. ArgA subfamily.

The protein resides in the cytoplasm. The catalysed reaction is L-glutamate + acetyl-CoA = N-acetyl-L-glutamate + CoA + H(+). It functions in the pathway amino-acid biosynthesis; L-arginine biosynthesis; N(2)-acetyl-L-ornithine from L-glutamate: step 1/4. In Aliivibrio fischeri (strain MJ11) (Vibrio fischeri), this protein is Amino-acid acetyltransferase.